Reading from the N-terminus, the 32-residue chain is Conotoxin pr6d (32 aa).

The residue at position 5 (P5) is a 4-hydroxyproline. Intrachain disulfides connect C7–C20, C14–C25, and C19–C30.

Expressed by the venom duct.

It is found in the secreted. The protein is Conotoxin pr6d of Conus parius (Cone snail).